A 528-amino-acid chain; its full sequence is Lysine--tRNA ligase (528 aa).

A 'HIGH' region motif is present at residues 44–52 (PSGLPHIGT). Positions 290 to 294 (KISKS) match the 'KMSKS' region motif. Position 293 (Lys-293) interacts with ATP.

It belongs to the class-I aminoacyl-tRNA synthetase family.

It is found in the cytoplasm. The catalysed reaction is tRNA(Lys) + L-lysine + ATP = L-lysyl-tRNA(Lys) + AMP + diphosphate. The polypeptide is Lysine--tRNA ligase (lysS) (Rickettsia prowazekii (strain Madrid E)).